The chain runs to 333 residues: Tetraacyldisaccharide 4'-kinase (333 aa).

60-67 is a binding site for ATP; the sequence is TVGGTGKT.

This sequence belongs to the LpxK family.

The catalysed reaction is a lipid A disaccharide + ATP = a lipid IVA + ADP + H(+). It participates in glycolipid biosynthesis; lipid IV(A) biosynthesis; lipid IV(A) from (3R)-3-hydroxytetradecanoyl-[acyl-carrier-protein] and UDP-N-acetyl-alpha-D-glucosamine: step 6/6. Transfers the gamma-phosphate of ATP to the 4'-position of a tetraacyldisaccharide 1-phosphate intermediate (termed DS-1-P) to form tetraacyldisaccharide 1,4'-bis-phosphate (lipid IVA). The protein is Tetraacyldisaccharide 4'-kinase of Ectopseudomonas mendocina (strain ymp) (Pseudomonas mendocina).